Consider the following 412-residue polypeptide: NADH-quinone oxidoreductase subunit D (412 aa).

Belongs to the complex I 49 kDa subunit family. NDH-1 is composed of 14 different subunits. Subunits NuoB, C, D, E, F, and G constitute the peripheral sector of the complex.

The protein localises to the cell inner membrane. It catalyses the reaction a quinone + NADH + 5 H(+)(in) = a quinol + NAD(+) + 4 H(+)(out). Its function is as follows. NDH-1 shuttles electrons from NADH, via FMN and iron-sulfur (Fe-S) centers, to quinones in the respiratory chain. The immediate electron acceptor for the enzyme in this species is believed to be ubiquinone. Couples the redox reaction to proton translocation (for every two electrons transferred, four hydrogen ions are translocated across the cytoplasmic membrane), and thus conserves the redox energy in a proton gradient. In Sulfurimonas denitrificans (strain ATCC 33889 / DSM 1251) (Thiomicrospira denitrificans (strain ATCC 33889 / DSM 1251)), this protein is NADH-quinone oxidoreductase subunit D.